The primary structure comprises 453 residues: Retroviral integration site protein Fli-1 homolog (453 aa).

Residues 111 to 197 (PPPPNMTTNE…SHLNYLRDSS (87 aa)) enclose the PNT domain. Residues 201 to 214 (GYNTQAHTDQSSRL) are compositionally biased toward polar residues. Residues 201–273 (GYNTQAHTDQ…YQILGPTSSR (73 aa)) are disordered. Residues 215–226 (TAKEDPSYEAVR) are compositionally biased toward basic and acidic residues. 2 stretches are compositionally biased toward polar residues: residues 230 to 239 (WGNSMSSPVT) and 246 to 273 (GTQN…TSSR). Residues 282–362 (IQLWQFLLEL…HGKRYAYKFD (81 aa)) constitute a DNA-binding region (ETS).

Belongs to the ETS family.

It localises to the nucleus. This chain is Retroviral integration site protein Fli-1 homolog (fli1), found in Xenopus laevis (African clawed frog).